The chain runs to 288 residues: 4-diphosphocytidyl-2-C-methyl-D-erythritol kinase (288 aa).

Residue lysine 8 is part of the active site. An ATP-binding site is contributed by 90–100 (PVGAGLAGGSS). The active site involves aspartate 132.

This sequence belongs to the GHMP kinase family. IspE subfamily.

It catalyses the reaction 4-CDP-2-C-methyl-D-erythritol + ATP = 4-CDP-2-C-methyl-D-erythritol 2-phosphate + ADP + H(+). It functions in the pathway isoprenoid biosynthesis; isopentenyl diphosphate biosynthesis via DXP pathway; isopentenyl diphosphate from 1-deoxy-D-xylulose 5-phosphate: step 3/6. Its function is as follows. Catalyzes the phosphorylation of the position 2 hydroxy group of 4-diphosphocytidyl-2C-methyl-D-erythritol. The chain is 4-diphosphocytidyl-2-C-methyl-D-erythritol kinase from Chlamydia trachomatis serovar L2b (strain UCH-1/proctitis).